The chain runs to 82 residues: MGRRKSKRKPPPKRKNIEPLDQQFNCPFCNHEKSCEVKMDKSRNTAKITCRVCLEDFQTGINFLSEPIDVYNDWVDACETAN.

Zn(2+) is bound by residues Cys26, Cys29, Cys50, and Cys53.

Belongs to the ELOF1 family.

The protein resides in the nucleus. In terms of biological role, transcription elongation factor implicated in the maintenance of proper chromatin structure in actively transcribed regions. This chain is Transcription elongation factor 1 homolog, found in Drosophila melanogaster (Fruit fly).